Consider the following 299-residue polypeptide: Porphobilinogen deaminase (299 aa).

The residue at position 234 (cysteine 234) is an S-(dipyrrolylmethanemethyl)cysteine.

This sequence belongs to the HMBS family. Monomer. It depends on dipyrromethane as a cofactor.

The enzyme catalyses 4 porphobilinogen + H2O = hydroxymethylbilane + 4 NH4(+). It participates in porphyrin-containing compound metabolism; protoporphyrin-IX biosynthesis; coproporphyrinogen-III from 5-aminolevulinate: step 2/4. Tetrapolymerization of the monopyrrole PBG into the hydroxymethylbilane pre-uroporphyrinogen in several discrete steps. This is Porphobilinogen deaminase from Corynebacterium efficiens (strain DSM 44549 / YS-314 / AJ 12310 / JCM 11189 / NBRC 100395).